Consider the following 830-residue polypeptide: MVLRYNSPRLNILELVLLYVGFFSIGSLNLLQKRKATSDPYRRKNRFGKEPIGIISWWILGIALTYVVDISNLVIYALRVPNWWPCKTTVVCLILFLLFWIIVLISCADSKALPKNADSILKAYRLSVLYVWAIDIVFETIFIVYSPHPNETFQGIVLADHVARLVLCVFATAIYLTYRRKRHTHDPLDFEERQLTEESNVNENAISQNPSTVQLGVSASTSNFGTLKSTSKKPSDKSWAEYFRSFSTLLPYLWPTKDYRLQFQIFICIVLLFLGRAVNILAPRQLGVLTEKLTKHSEKIPWSDVILFVIYRFLQGNMGVIGSLRSFLWVPVSQYAYRAISTKALRHVLNLSYDFHLNKRAGEVLTALTKGSSLNTFAEQVVFQIGPVLLDLGVAMVYFFIKFDIYFTLIVLIMTLCYCYVTVKITSWRTEARRKMVNSWRESYAVQNDAIMNFETVKNFDADDFENERYGHAVDIYLKQERKVLFSLNFLNIVQGGIFTFSLAIACLLSAYRVTFGFNTVGDFVILLTYMIQLQQPLNFFGTLYRSLQNSIIDTERLLEIFEEKPTVVEKPNAPDLKVTQGKVIFSHVSFAYDPRKPVLSDINFVAQPGKVIALVGESGGGKSTIMRILLRFFDVNSGSITIDDQDIRNVTLSSLRSSIGVVPQDSTLFNDTILYNIKYAKPSATNEEIYAAAKAAQIHDRILQFPDGYNSRVGERGLKLSGGEKQRVAVARAILKDPSIILLDEATSALDTNTERQIQAALNRLASGRTAIVIAHRLSTITNADLILCISNGRIVETGTHEELIKRDGGAYKKMWFQQAMGKTSAETH.

The first 27 residues, 1-27 (MVLRYNSPRLNILELVLLYVGFFSIGS), serve as a signal peptide directing secretion. 3 helical membrane passes run 51–71 (PIGI…VDIS), 88–108 (TTVV…ISCA), and 126–146 (LSVL…IVYS). N150 is a glycosylation site (N-linked (GlcNAc...) asparagine). Helical transmembrane passes span 156 to 176 (IVLA…AIYL), 263 to 283 (FQIF…ILAP), and 304 to 324 (DVIL…IGSL). Residues 265–550 (IFICIVLLFL…FGTLYRSLQN (286 aa)) form the ABC transmembrane type-1 domain. N350 carries N-linked (GlcNAc...) asparagine glycosylation. Helical transmembrane passes span 381–401 (VVFQ…YFFI) and 403–423 (FDIY…YVTV). Residues 429–433 (RTEAR), 492–495 (NIVQ), and G542 contribute to the glutathione site. The chain crosses the membrane as a helical span at residues 490 to 511 (FLNIVQGGIFTFSLAIACLLSA). The 235-residue stretch at 584–818 (VIFSHVSFAY…DGGAYKKMWF (235 aa)) folds into the ABC transporter domain. Residues Y593 and 617 to 628 (GESGGGKSTIMR) contribute to the ATP site.

The protein belongs to the ABC transporter superfamily. ABCB family. Heavy Metal importer (TC 3.A.1.210) subfamily.

The protein resides in the vacuole membrane. Involved in metal tolerance. Probably involved in the transport of metal-bound phytochelatins. Compartmentalizes cadmium within vacuoles, thereby protecting cells from cadmium toxicity. This is Heavy metal tolerance protein (hmt1) from Schizosaccharomyces pombe (strain 972 / ATCC 24843) (Fission yeast).